Reading from the N-terminus, the 521-residue chain is Protein nucleotidyltransferase YdiU (521 aa).

Positions 109, 111, 112, 131, 143, 144, 194, and 201 each coordinate ATP. Residue aspartate 270 is the Proton acceptor of the active site. 2 residues coordinate Mg(2+): asparagine 271 and aspartate 280. Aspartate 280 provides a ligand contact to ATP.

This sequence belongs to the SELO family. Mg(2+) serves as cofactor. It depends on Mn(2+) as a cofactor.

The catalysed reaction is L-seryl-[protein] + ATP = 3-O-(5'-adenylyl)-L-seryl-[protein] + diphosphate. The enzyme catalyses L-threonyl-[protein] + ATP = 3-O-(5'-adenylyl)-L-threonyl-[protein] + diphosphate. It carries out the reaction L-tyrosyl-[protein] + ATP = O-(5'-adenylyl)-L-tyrosyl-[protein] + diphosphate. It catalyses the reaction L-histidyl-[protein] + UTP = N(tele)-(5'-uridylyl)-L-histidyl-[protein] + diphosphate. The catalysed reaction is L-seryl-[protein] + UTP = O-(5'-uridylyl)-L-seryl-[protein] + diphosphate. The enzyme catalyses L-tyrosyl-[protein] + UTP = O-(5'-uridylyl)-L-tyrosyl-[protein] + diphosphate. Functionally, nucleotidyltransferase involved in the post-translational modification of proteins. It can catalyze the addition of adenosine monophosphate (AMP) or uridine monophosphate (UMP) to a protein, resulting in modifications known as AMPylation and UMPylation. In Burkholderia pseudomallei (strain 1106a), this protein is Protein nucleotidyltransferase YdiU.